A 492-amino-acid chain; its full sequence is Ketol-acid reductoisomerase (NADP(+)) (492 aa).

Positions 17-208 (LGVCEFMDRS…GGDRAGVLKS (192 aa)) constitute a KARI N-terminal Rossmann domain. NADP(+) is bound by residues 45–48 (CGAQ), Arg-68, Arg-76, Ser-78, and 108–110 (DKQ). His-132 is an active-site residue. Gly-158 is an NADP(+) binding site. 2 KARI C-terminal knotted domains span residues 209–353 (SFVA…AEQE) and 354–487 (YYDN…MTEM). The Mg(2+) site is built by Asp-217, Glu-221, Glu-389, and Glu-393. Ser-414 contributes to the substrate binding site.

The protein belongs to the ketol-acid reductoisomerase family. Mg(2+) serves as cofactor.

It catalyses the reaction (2R)-2,3-dihydroxy-3-methylbutanoate + NADP(+) = (2S)-2-acetolactate + NADPH + H(+). The enzyme catalyses (2R,3R)-2,3-dihydroxy-3-methylpentanoate + NADP(+) = (S)-2-ethyl-2-hydroxy-3-oxobutanoate + NADPH + H(+). Its pathway is amino-acid biosynthesis; L-isoleucine biosynthesis; L-isoleucine from 2-oxobutanoate: step 2/4. The protein operates within amino-acid biosynthesis; L-valine biosynthesis; L-valine from pyruvate: step 2/4. In terms of biological role, involved in the biosynthesis of branched-chain amino acids (BCAA). Catalyzes an alkyl-migration followed by a ketol-acid reduction of (S)-2-acetolactate (S2AL) to yield (R)-2,3-dihydroxy-isovalerate. In the isomerase reaction, S2AL is rearranged via a Mg-dependent methyl migration to produce 3-hydroxy-3-methyl-2-ketobutyrate (HMKB). In the reductase reaction, this 2-ketoacid undergoes a metal-dependent reduction by NADPH to yield (R)-2,3-dihydroxy-isovalerate. The chain is Ketol-acid reductoisomerase (NADP(+)) from Cytophaga hutchinsonii (strain ATCC 33406 / DSM 1761 / CIP 103989 / NBRC 15051 / NCIMB 9469 / D465).